Reading from the N-terminus, the 208-residue chain is Thymidylate kinase (208 aa).

10 to 17 (GPEGSGKT) provides a ligand contact to ATP.

Belongs to the thymidylate kinase family.

The catalysed reaction is dTMP + ATP = dTDP + ADP. Its function is as follows. Phosphorylation of dTMP to form dTDP in both de novo and salvage pathways of dTTP synthesis. This is Thymidylate kinase from Bacillus anthracis.